We begin with the raw amino-acid sequence, 194 residues long: Adenylate kinase isoenzyme 1 (194 aa).

ATP is bound at residue Gly-19–Thr-24. Residues Ser-39–Val-68 are NMP. AMP-binding positions include Thr-40, Arg-45, Glu-66–Val-68, Gly-95–Arg-98, and Gln-102. An LID region spans residues Lys-132–Asp-142. Arg-133 contacts ATP. AMP is bound by residues Arg-139 and Arg-150. Gly-178 serves as a coordination point for ATP.

Belongs to the adenylate kinase family. AK1 subfamily. In terms of assembly, monomer. Mg(2+) serves as cofactor. In terms of tissue distribution, skeletal muscle.

Its subcellular location is the cytoplasm. The enzyme catalyses a ribonucleoside 5'-phosphate + ATP = a ribonucleoside 5'-diphosphate + ADP. The catalysed reaction is AMP + ATP = 2 ADP. It carries out the reaction dAMP + ATP = dADP + ADP. It catalyses the reaction dATP + AMP = dADP + ADP. The enzyme catalyses dAMP + dATP = 2 dADP. The catalysed reaction is a 2'-deoxyribonucleoside 5'-diphosphate + ATP = a 2'-deoxyribonucleoside 5'-triphosphate + ADP. It carries out the reaction a ribonucleoside 5'-diphosphate + ATP = a ribonucleoside 5'-triphosphate + ADP. It catalyses the reaction CDP + GTP = CTP + GDP. The enzyme catalyses GDP + ATP = GTP + ADP. The catalysed reaction is UDP + ATP = UTP + ADP. It carries out the reaction GTP + UDP = UTP + GDP. It catalyses the reaction dTDP + GTP = dTTP + GDP. The enzyme catalyses dCDP + GTP = dCTP + GDP. The catalysed reaction is dGDP + ATP = dGTP + ADP. It carries out the reaction dADP + GTP = dATP + GDP. It catalyses the reaction thiamine diphosphate + ADP = thiamine triphosphate + AMP. In terms of biological role, catalyzes the reversible transfer of the terminal phosphate group between ATP and AMP. Also displays broad nucleoside diphosphate kinase activity. Plays an important role in cellular energy homeostasis and in adenine nucleotide metabolism. Also catalyzes at a very low rate the synthesis of thiamine triphosphate (ThTP) from thiamine diphosphate (ThDP) and ADP. The chain is Adenylate kinase isoenzyme 1 from Gallus gallus (Chicken).